Consider the following 949-residue polypeptide: Pyruvate, phosphate dikinase, chloroplastic (949 aa).

Residues 1–74 (MASAFKGILI…VMAPASDPTS (74 aa)) constitute a chloroplast transit peptide. Thr530 is subject to Phosphothreonine; by PDRP1. His532 serves as the catalytic Tele-phosphohistidine intermediate. Substrate-binding residues include Arg638, Arg695, Glu824, Gly845, Thr846, Asn847, and Asp848. Mg(2+) is bound at residue Glu824. Residue Asp848 coordinates Mg(2+). Cys910 acts as the Proton donor in catalysis.

It belongs to the PEP-utilizing enzyme family. In terms of assembly, homodimer. Requires Mg(2+) as cofactor. Phosphorylation of Thr-530 in the dark inactivates the enzyme. Dephosphorylation upon light stimulation reactivates the enzyme.

It is found in the plastid. The protein localises to the chloroplast. The enzyme catalyses pyruvate + phosphate + ATP = phosphoenolpyruvate + AMP + diphosphate + H(+). Activated by light-induced dephosphorylation. Inhibited by dark-induced phosphorylation. Both reactions are catalyzed by PDRP1. Formation of phosphoenolpyruvate, which is the primary acceptor of CO(2) in C4 and some Crassulacean acid metabolism plants. The polypeptide is Pyruvate, phosphate dikinase, chloroplastic (PPD) (Mesembryanthemum crystallinum (Common ice plant)).